A 132-amino-acid polypeptide reads, in one-letter code: Small ribosomal subunit protein uS8 (132 aa).

It belongs to the universal ribosomal protein uS8 family. Part of the 30S ribosomal subunit. Contacts proteins S5 and S12.

In terms of biological role, one of the primary rRNA binding proteins, it binds directly to 16S rRNA central domain where it helps coordinate assembly of the platform of the 30S subunit. The protein is Small ribosomal subunit protein uS8 of Geobacillus kaustophilus (strain HTA426).